The primary structure comprises 252 residues: tRNA (guanine-N(1)-)-methyltransferase (252 aa).

S-adenosyl-L-methionine contacts are provided by residues Gly-113 and 133-138 (IGDYVL).

It belongs to the RNA methyltransferase TrmD family. In terms of assembly, homodimer.

The protein resides in the cytoplasm. It carries out the reaction guanosine(37) in tRNA + S-adenosyl-L-methionine = N(1)-methylguanosine(37) in tRNA + S-adenosyl-L-homocysteine + H(+). Its function is as follows. Specifically methylates guanosine-37 in various tRNAs. This is tRNA (guanine-N(1)-)-methyltransferase from Xanthomonas campestris pv. campestris (strain B100).